Consider the following 639-residue polypeptide: Elongation factor 4 (639 aa).

The tr-type G domain maps to alanine 39–threonine 220. GTP-binding positions include aspartate 51–threonine 56 and asparagine 167–aspartate 170.

The protein belongs to the TRAFAC class translation factor GTPase superfamily. Classic translation factor GTPase family. LepA subfamily.

The protein resides in the cell membrane. The enzyme catalyses GTP + H2O = GDP + phosphate + H(+). Functionally, required for accurate and efficient protein synthesis under certain stress conditions. May act as a fidelity factor of the translation reaction, by catalyzing a one-codon backward translocation of tRNAs on improperly translocated ribosomes. Back-translocation proceeds from a post-translocation (POST) complex to a pre-translocation (PRE) complex, thus giving elongation factor G a second chance to translocate the tRNAs correctly. Binds to ribosomes in a GTP-dependent manner. The polypeptide is Elongation factor 4 (Mycobacterium sp. (strain JLS)).